Reading from the N-terminus, the 797-residue chain is Xaa-Pro dipeptidyl-peptidase (797 aa).

Residues S370, D490, and H521 each act as charge relay system in the active site.

It belongs to the peptidase S15 family. In terms of assembly, homodimer.

Its subcellular location is the cytoplasm. It carries out the reaction Hydrolyzes Xaa-Pro-|- bonds to release unblocked, N-terminal dipeptides from substrates including Ala-Pro-|-p-nitroanilide and (sequentially) Tyr-Pro-|-Phe-Pro-|-Gly-Pro-|-Ile.. Removes N-terminal dipeptides sequentially from polypeptides having unsubstituted N-termini provided that the penultimate residue is proline. In Lacticaseibacillus paracasei (strain ATCC 334 / BCRC 17002 / CCUG 31169 / CIP 107868 / KCTC 3260 / NRRL B-441) (Lactobacillus paracasei), this protein is Xaa-Pro dipeptidyl-peptidase.